Reading from the N-terminus, the 386-residue chain is Succinyl-diaminopimelate desuccinylase (386 aa).

Position 72 (His72) interacts with Zn(2+). Asp74 is a catalytic residue. Asp105 is a binding site for Zn(2+). Residue Glu139 is the Proton acceptor of the active site. Residues Glu140, Glu168, and His353 each coordinate Zn(2+).

This sequence belongs to the peptidase M20A family. DapE subfamily. As to quaternary structure, homodimer. Requires Zn(2+) as cofactor. Co(2+) serves as cofactor.

It catalyses the reaction N-succinyl-(2S,6S)-2,6-diaminopimelate + H2O = (2S,6S)-2,6-diaminopimelate + succinate. It participates in amino-acid biosynthesis; L-lysine biosynthesis via DAP pathway; LL-2,6-diaminopimelate from (S)-tetrahydrodipicolinate (succinylase route): step 3/3. Its function is as follows. Catalyzes the hydrolysis of N-succinyl-L,L-diaminopimelic acid (SDAP), forming succinate and LL-2,6-diaminopimelate (DAP), an intermediate involved in the bacterial biosynthesis of lysine and meso-diaminopimelic acid, an essential component of bacterial cell walls. This is Succinyl-diaminopimelate desuccinylase from Rhodospirillum centenum (strain ATCC 51521 / SW).